The sequence spans 397 residues: Guanine nucleotide-binding protein G(s) subunit alpha (397 aa).

The interval 1–23 is disordered; it reads MGCLGNSKTEDQRNEEKAQREAN. The N-palmitoyl glycine moiety is linked to residue G2. C3 carries the S-palmitoyl cysteine lipid modification. Basic and acidic residues predominate over residues 8–23; sequence KTEDQRNEEKAQREAN. Residues 39–397 enclose the G-alpha domain; that stretch reads ATHRLLLLGA…RMHLRQYELL (359 aa). The segment at 42-55 is G1 motif; it reads RLLLLGAGESGKST. GTP-binding positions include 47-55, 182-189, 208-212, 277-280, and A369; these read GAGESGKST, LLRCRVLT, DVGGQ, and NKQD. Mg(2+) contacts are provided by S54 and T189. A G2 motif region spans residues 181–189; it reads DLLRCRVLT. The G3 motif stretch occupies residues 204–213; sequence FHMFDVGGQR. A G4 motif region spans residues 273 to 280; it reads ILFLNKQD. Positions 367-372 are G5 motif; it reads TCAVDT.

Belongs to the G-alpha family. G(s) subfamily. In terms of assembly, heterotrimeric G proteins are composed of 3 units; alpha, beta and gamma. The alpha chain contains the guanine nucleotide binding site. Interacts with CRY1; the interaction may block GPCR-mediated regulation of cAMP concentrations. Interacts with ADCY6 and stimulates its adenylyl cyclase activity. Interacts with ADCY2 and ADCY5. Stimulates the ADCY5 adenylyl cyclase activity. Interaction with SASH1.

Its subcellular location is the cell membrane. Functionally, guanine nucleotide-binding proteins (G proteins) function as transducers in numerous signaling pathways controlled by G protein-coupled receptors (GPCRs). Signaling involves the activation of adenylyl cyclases, resulting in increased levels of the signaling molecule cAMP. GNAS functions downstream of several GPCRs, including beta-adrenergic receptors. Stimulates the Ras signaling pathway via RAPGEF2. The polypeptide is Guanine nucleotide-binding protein G(s) subunit alpha (GNAS) (Sus scrofa (Pig)).